A 268-amino-acid chain; its full sequence is CCAAT/enhancer-binding protein delta (268 aa).

Disordered regions lie at residues methionine 1 to threonine 48, glycine 97 to glycine 132, and alanine 152 to methionine 219. Serine 2 bears the N-acetylserine mark. Lysine 120 is covalently cross-linked (Glycyl lysine isopeptide (Lys-Gly) (interchain with G-Cter in SUMO)). Residues proline 155–serine 167 are compositionally biased toward pro residues. Positions valine 177 to asparagine 201 are enriched in basic and acidic residues. In terms of domain architecture, bZIP spans serine 191–leucine 254. The segment at arginine 195 to lysine 222 is basic motif. Residues leucine 226 to leucine 254 are leucine-zipper.

The protein belongs to the bZIP family. C/EBP subfamily. As to quaternary structure, binds DNA as a homodimer and as a heterodimer. Can form stable heterodimers with CEBPA, CEBPB and CEBPE. Directly interacts with SPI1/PU.1; this interaction does not affect DNA-binding properties of each partner. Interacts with PRDM16.

It is found in the nucleus. In terms of biological role, transcription activator that recognizes two different DNA motifs: the CCAAT homology common to many promoters and the enhanced core homology common to many enhancers. Important transcription factor regulating the expression of genes involved in immune and inflammatory responses. Transcriptional activator that enhances IL6 transcription alone and as heterodimer with CEBPB. The chain is CCAAT/enhancer-binding protein delta (Cebpd) from Mus musculus (Mouse).